The chain runs to 869 residues: Alanine--tRNA ligase (869 aa).

Zn(2+)-binding residues include histidine 559, histidine 563, cysteine 660, and histidine 664.

The protein belongs to the class-II aminoacyl-tRNA synthetase family. Requires Zn(2+) as cofactor.

The protein localises to the cytoplasm. The enzyme catalyses tRNA(Ala) + L-alanine + ATP = L-alanyl-tRNA(Ala) + AMP + diphosphate. Functionally, catalyzes the attachment of alanine to tRNA(Ala) in a two-step reaction: alanine is first activated by ATP to form Ala-AMP and then transferred to the acceptor end of tRNA(Ala). Also edits incorrectly charged Ser-tRNA(Ala) and Gly-tRNA(Ala) via its editing domain. The polypeptide is Alanine--tRNA ligase (Janthinobacterium sp. (strain Marseille) (Minibacterium massiliensis)).